The chain runs to 676 residues: Portal protein (676 aa).

The disordered stretch occupies residues 383 to 404 (PGFGKGGNSRGSAGQDQGGRAP). Positions 422 to 443 (LEGYINNLFGTIERLRETNAGL) are putative leucine zipper motif. The segment at 627 to 676 (PPPSPVGADFRPGASPRGRSRSRSPGRTARGAPDQGGGIGHRDGRRDGRR) is disordered. Over residues 666-676 (GHRDGRRDGRR) the composition is skewed to basic and acidic residues.

Belongs to the herpesviridae portal protein family. Homododecamerizes. Interacts with terminase subunits TRM1 and TRM3.

Its subcellular location is the virion. The protein resides in the host nucleus. In terms of biological role, forms a portal in the viral capsid through which viral DNA is translocated during DNA packaging. Assembles as a dodecamer at a single fivefold axe of the T=16 icosahedric capsid. Binds to the molecular motor that translocates the viral DNA, termed terminase. This is Portal protein (UL6) from Human herpesvirus 1 (strain 17) (HHV-1).